Consider the following 560-residue polypeptide: Eukaryotic translation initiation factor 3 subunit D-1 (560 aa).

A disordered region spans residues 98–166 (VQKPPHQRGR…RGPPPKMRES (69 aa)). A compositionally biased stretch (basic residues) spans 100–121 (KPPHQRGRFRNMRNSRSGRGRN). T128 is subject to Phosphothreonine. Positions 147–156 (GRGMGKKFGH) are enriched in basic residues. Residues 291 to 305 (EFDLLTVNESSVEPP) are RNA gate.

The protein belongs to the eIF-3 subunit D family. Component of the eukaryotic translation initiation factor 3 (eIF-3) complex. The eIF-3 complex interacts with pix.

It is found in the cytoplasm. Functionally, mRNA cap-binding component of the eukaryotic translation initiation factor 3 (eIF-3) complex, which is involved in protein synthesis of a specialized repertoire of mRNAs and, together with other initiation factors, stimulates binding of mRNA and methionyl-tRNAi to the 40S ribosome. The eIF-3 complex specifically targets and initiates translation of a subset of mRNAs involved in cell proliferation. In the eIF-3 complex, eif3d specifically recognizes and binds the 7-methylguanosine cap of a subset of mRNAs. This Drosophila simulans (Fruit fly) protein is Eukaryotic translation initiation factor 3 subunit D-1.